Consider the following 132-residue polypeptide: Small integral membrane protein 33 (132 aa).

Positions 1–28 are disordered; that stretch reads MHQAGHYSWPSPAVNSSSEQEPQRQLPE. N-linked (GlcNAc...) asparagine glycosylation occurs at Asn15. The chain crosses the membrane as a helical span at residues 43–63; it reads PVVTVIVAVFVLLAVCIIVAV. The interval 99–132 is disordered; that stretch reads PQDSPEEAPPGPLVPGSCPAPDGPRPSIDEVTCL.

The protein localises to the membrane. In Homo sapiens (Human), this protein is Small integral membrane protein 33.